A 769-amino-acid polypeptide reads, in one-letter code: MNTKLTKIISGLFVATAAFQTASAGNITDIKVSSLPNKQKIVKVSFDKEIVNPTGFVTSSPARIALDFEQTGISMDQQVLEYADPLLSKISAAQNSSRARLVLNLNKPGQYNTEVRGNKVWIFINESDDTVSAPARPAVKAAPAAPAKQQAAAPSTKSAVSVSEPFTPAKQQAAAPFTESVVSVSAPFSPAKQQAAASAKQQAAAPAKQQAAAPAKQQAAAPAKQTNIDFRKDGKNAGIIELAALGFAGQPDISQQHDHIIVTLKNHTLPTTLQRSLDVADFKTPVQKVTLKRLNNDTQLIITTAGNWELVNKSAAPGYFTFQVLPKKQNLESGGVNNAPKTFTGRKISLDFQDVEIRTILQILAKESGMNIVASDSVNGKMTLSLKDVPWDQALDLVMQARNLDMRQQGNIVNIAPRDELLAKDKALLQAEKDIADLGALYSQNFQLKYKNVEEFRSILRLDNADTTGNRNTLISGRGSVLIDPATNTLIVTDTRSVIEKFRKLIDELDVPAQQVMIEARIVEAADGFSRDLGVKFGATGKKKLKNDTSAFGWGVNSGFGGDDKWGAETKINLPITAAANSISLVRAISSGALNLELSASESLSKTKTLANPRVLTQNRKEAKIESGYEIPFTVTSIANGGSSTNTELKKAVLGLTVTPNITPDGQIIMTVKINKDSPAQCASGNQTILCISTKNLNTQAMVENGGTLIVGGIYEEDNGNTLTKVPLLGDIPVIGNLFKTRGKKTDRRELLIFITPRIMGTAGNSLRY.

The N-terminal stretch at 1 to 24 is a signal peptide; the sequence is MNTKLTKIISGLFVATAAFQTASA. 2 stretches are compositionally biased toward low complexity: residues 135–154 and 197–225; these read ARPA…AAAP and ASAK…PAKQ. Disordered stretches follow at residues 135–156 and 197–228; these read ARPA…APST and ASAK…QTNI.

Belongs to the bacterial secretin family. PilQ subfamily. As to quaternary structure, homododecamer. Tetramer of trimer.

It is found in the cell outer membrane. Its function is as follows. Required for type IV pilus biogenesis and competence. Could function as a pore for exit of the pilus but also as a channel for entry of heme and antimicrobial agents and uptake of transforming DNA. This is Type IV pilus biogenesis and competence protein PilQ (pilQ) from Neisseria meningitidis serogroup B (strain ATCC BAA-335 / MC58).